A 341-amino-acid polypeptide reads, in one-letter code: Phosphoribosylformylglycinamidine cyclo-ligase (341 aa).

Belongs to the AIR synthase family.

The protein localises to the cytoplasm. The catalysed reaction is 2-formamido-N(1)-(5-O-phospho-beta-D-ribosyl)acetamidine + ATP = 5-amino-1-(5-phospho-beta-D-ribosyl)imidazole + ADP + phosphate + H(+). It functions in the pathway purine metabolism; IMP biosynthesis via de novo pathway; 5-amino-1-(5-phospho-D-ribosyl)imidazole from N(2)-formyl-N(1)-(5-phospho-D-ribosyl)glycinamide: step 2/2. The polypeptide is Phosphoribosylformylglycinamidine cyclo-ligase (Picosynechococcus sp. (strain ATCC 27264 / PCC 7002 / PR-6) (Agmenellum quadruplicatum)).